A 205-amino-acid polypeptide reads, in one-letter code: Urease accessory protein UreG (205 aa).

14–21 (GPVGSGKT) provides a ligand contact to GTP.

It belongs to the SIMIBI class G3E GTPase family. UreG subfamily. Homodimer. UreD, UreF and UreG form a complex that acts as a GTP-hydrolysis-dependent molecular chaperone, activating the urease apoprotein by helping to assemble the nickel containing metallocenter of UreC. The UreE protein probably delivers the nickel.

Its subcellular location is the cytoplasm. Its function is as follows. Facilitates the functional incorporation of the urease nickel metallocenter. This process requires GTP hydrolysis, probably effectuated by UreG. The protein is Urease accessory protein UreG of Enterobacter sp. (strain 638).